Reading from the N-terminus, the 533-residue chain is Beta-1,4 N-acetylgalactosaminyltransferase 1 (533 aa).

Over M1–A7 the chain is Cytoplasmic. A helical; Signal-anchor for type II membrane protein transmembrane segment spans residues L8 to A25. Topologically, residues S26–Q533 are lumenal. N79, N179, and N274 each carry an N-linked (GlcNAc...) asparagine glycan. C429 and C476 are oxidised to a cystine.

This sequence belongs to the glycosyltransferase 2 family. Homodimer; disulfide-linked.

The protein resides in the golgi apparatus membrane. It carries out the reaction a ganglioside GM3 (d18:1(4E)) + UDP-N-acetyl-alpha-D-galactosamine = a ganglioside GM2 (d18:1(4E)) + UDP + H(+). It catalyses the reaction a ganglioside GM3 + UDP-N-acetyl-alpha-D-galactosamine = a ganglioside GM2 + UDP + H(+). The enzyme catalyses a ganglioside GD3 + UDP-N-acetyl-alpha-D-galactosamine = a ganglioside GD2 + UDP + H(+). The catalysed reaction is a ganglioside GD3 (d18:1(4E)) + UDP-N-acetyl-alpha-D-galactosamine = a ganglioside GD2 (d18:1(4E)) + UDP + H(+). It carries out the reaction a beta-D-Gal-(1-&gt;4)-beta-D-Glc-(1&lt;-&gt;1)-Cer(d18:1(4E)) + UDP-N-acetyl-alpha-D-galactosamine = a ganglioside GA2 (d18:1(4E)) + UDP + H(+). It catalyses the reaction a ganglioside GD1a + UDP-N-acetyl-alpha-D-galactosamine = a ganglioside GalNAc-GD1a + UDP + H(+). The enzyme catalyses a ganglioside GT3 (d18:1(4E)) + UDP-N-acetyl-alpha-D-galactosamine = a ganglioside GT2 (d18:1(4E)) + UDP + H(+). The catalysed reaction is a beta-D-galactosyl-(1-&gt;4)-beta-D-glucosyl-(1&lt;-&gt;1)-ceramide + UDP-N-acetyl-alpha-D-galactosamine = a ganglioside GA2 + UDP + H(+). It carries out the reaction a neolactoside IV(3)-alpha-NeuGc-nLc4Cer + UDP-N-acetyl-alpha-D-galactosamine = a neolactoside IV(4)-beta-GalNAc-IV(3)-alpha-NeuGc-nLc4Cer + UDP + H(+). The protein operates within sphingolipid metabolism. Functionally, involved in the biosynthesis of gangliosides GM2, GD2, GT2 and GA2 from GM3, GD3, GT3 and GA3, respectively. This is Beta-1,4 N-acetylgalactosaminyltransferase 1 from Homo sapiens (Human).